The sequence spans 166 residues: Cold-inducible RNA-binding protein (166 aa).

Residues 6-84 (GKLFVGGLNF…RQIRVDQAGK (79 aa)) form the RRM domain. Residues 68-166 (NGKSVDGRQI…DSYDSYTTQE (99 aa)) form a disordered region. The segment covering 93 to 120 (YRGGSSGGRGFFRGGRGRGGGGDRGYGG) has biased composition (gly residues). The segment covering 121–166 (SSRFENRSGGYQSSGSRDYYGRSHGSYGDRSGGSYRDSYDSYTTQE) has biased composition (low complexity).

Interacts with prmt1. Interacts with elavl1/elrA (via RRM3). Associates with ribosomes. Post-translationally, methylated on arginine residues within RGG motifs. Methylation by prmt1 promotes cytoplasmic accumulation.

The protein resides in the nucleus. The protein localises to the nucleoplasm. It localises to the cytoplasm. Its function is as follows. Cold-inducible mRNA binding protein. Acts cooperatively with elavl1/elrA to stabilize AU-rich element (ARE)-containing mRNAs by binding to themm and inhibiting their deadenylation. Essential for embryonic gastrulation and neural development, acting to maintain the expression of a set of adhesion molecules, and cell movement during embryogenesis. Required for pronephros development. This Xenopus tropicalis (Western clawed frog) protein is Cold-inducible RNA-binding protein.